Reading from the N-terminus, the 326-residue chain is MIKIGNIELSSNIILAPMSGVTDLEFRRLVKRFGAGLVVSEMIASRAMIVESRQSLQKCSIMQDDATSACVQLAGCEPNVIAEAAKMNEDMGAKIIDLNFGCPAKKVVNGYSGSALMRDEGLAAKIFEAAVKAVKIPVTVKMRMGWDDQTKNAPTLAKIAERSGIQMVTVHGRTRCQFYSGNADWEFIKNVKEAVKIPVIANGDITNFAKAKEALEKSSADGVMVGRGAYGKPWLISQIDHYLKTGEEKPAPSIESQLDIVLEHYQAIVDYYGESAGVPIARKHMGWYSSGLPNSAEFRGAVNLMNDPIAVKDKIVEFYTSVINRE.

Residues 17–19 and Gln-72 each bind FMN; that span reads PMS. Residue Cys-102 is the Proton donor of the active site. FMN contacts are provided by residues Lys-141, 202–204, and 226–227; these read NGD and GR.

It belongs to the Dus family. FMN serves as cofactor.

It catalyses the reaction a 5,6-dihydrouridine in tRNA + NAD(+) = a uridine in tRNA + NADH + H(+). The enzyme catalyses a 5,6-dihydrouridine in tRNA + NADP(+) = a uridine in tRNA + NADPH + H(+). Functionally, catalyzes the synthesis of 5,6-dihydrouridine (D), a modified base found in the D-loop of most tRNAs, via the reduction of the C5-C6 double bond in target uridines. The polypeptide is Probable tRNA-dihydrouridine synthase (dus) (Rickettsia bellii (strain RML369-C)).